A 419-amino-acid chain; its full sequence is MPVSSDCQILKEDNVTHSFCGLACVGWLYQKIKDSFFLILGTHTCAHFLQNALGMMIFAKPRFGVALIEEADLSRAEPQLEAVIEEIKRDHNPSVIFLLSSCTPEVMKVDFKGLAHHLSTDKTPVLFVPASGLVFNFTQAEDSVLQALVPFCPEAPAGEKKVVFVGSVNDITADDLRTEAEQLGIPVGGFLPESRFDKLPAIGPDTVLAPIQPYLSRVCSRLNRERGSQVLTSLFPFGPDGTKTFWEDLAAMFGIKVDLSDRAEAAWEKIKPQTDLLKGKKIFLTADTMMELPLARFLKNAGAEVVECSSAYINKKFHARELEALEGVKVVEQPNFHRQLEEIRATRPDMIVTSLMTANPFVGNGFIVKWSMEFTLMSIHSWSGVFTLANLFVSPLLRRESLPEFDESVWLEGVMPSAQ.

Positions 20, 45, and 102 each coordinate [4Fe-4S] cluster.

It belongs to the BchN/ChlN family. Protochlorophyllide reductase is composed of three subunits; BchL, BchN and BchB. Forms a heterotetramer of two BchB and two BchN subunits. It depends on [4Fe-4S] cluster as a cofactor.

It carries out the reaction chlorophyllide a + oxidized 2[4Fe-4S]-[ferredoxin] + 2 ADP + 2 phosphate = protochlorophyllide a + reduced 2[4Fe-4S]-[ferredoxin] + 2 ATP + 2 H2O. It participates in porphyrin-containing compound metabolism; bacteriochlorophyll biosynthesis (light-independent). In terms of biological role, component of the dark-operative protochlorophyllide reductase (DPOR) that uses Mg-ATP and reduced ferredoxin to reduce ring D of protochlorophyllide (Pchlide) to form chlorophyllide a (Chlide). This reaction is light-independent. The NB-protein (BchN-BchB) is the catalytic component of the complex. The sequence is that of Light-independent protochlorophyllide reductase subunit N from Chlorobaculum tepidum (strain ATCC 49652 / DSM 12025 / NBRC 103806 / TLS) (Chlorobium tepidum).